Here is a 593-residue protein sequence, read N- to C-terminus: Pyruvate kinase isozyme A, chloroplastic (593 aa).

The interval 57–94 (DEPQSSPVLVSENGSGGVLSSATQEYGRNAAPGTDSSS) is disordered. Position 144 (Arg-144) interacts with substrate. Asn-146, Asp-178, and Thr-179 together coordinate K(+). An ATP-binding site is contributed by 146–149 (NMCH). Glu-343 is a binding site for Mg(2+). Gly-366, Asp-367, and Ser-399 together coordinate substrate. Asp-367 is a Mg(2+) binding site.

Belongs to the pyruvate kinase family. Mg(2+) is required as a cofactor. It depends on K(+) as a cofactor. Highest levels in roots. Also found in stems, leaves and flowers.

It is found in the plastid. The protein localises to the chloroplast. It catalyses the reaction pyruvate + ATP = phosphoenolpyruvate + ADP + H(+). It participates in carbohydrate degradation; glycolysis; pyruvate from D-glyceraldehyde 3-phosphate: step 5/5. The chain is Pyruvate kinase isozyme A, chloroplastic from Nicotiana tabacum (Common tobacco).